The following is a 98-amino-acid chain: DNA-binding protein Fis (98 aa).

Residues 74–93 constitute a DNA-binding region (H-T-H motif); it reads QTRAATMLGINRGTLRKKLK.

This sequence belongs to the transcriptional regulatory Fis family. As to quaternary structure, homodimer.

Its function is as follows. Activates ribosomal RNA transcription. Plays a direct role in upstream activation of rRNA promoters. In Glaesserella parasuis serovar 5 (strain SH0165) (Haemophilus parasuis), this protein is DNA-binding protein Fis.